A 35-amino-acid chain; its full sequence is Alpha-amanitin proprotein 2 (35 aa).

Residues 1–10 (MFDTNSTRLP) constitute a propeptide that is removed on maturation. (3R,4R)-4,5-dihydroxyisoleucine; in form alpha-amanitin is present on Ile-11. At Ile-11 the chain carries (3R,4S)-4-hydroxyisoleucine; in form gamma-amanitin. Positions 11 to 18 (IWGIGCNP) form a cross-link, cyclopeptide (Ile-Pro). A cross-link (2'-cysteinyl-6'-hydroxytryptophan sulfoxide (Trp-Cys)) is located at residues 12 to 16 (WGIGC). A 4-hydroxyproline modification is found at Pro-18. Positions 19–35 (WTAEHVDQTLVSGNDIC) are excised as a propeptide.

Belongs to the MSDIN fungal toxin family. Post-translationally, processed by the macrocyclase-peptidase enzyme POPB to yield a toxic bicyclic octapeptide. POPB first removes 10 residues from the N-terminus. Conformational trapping of the remaining peptide forces the enzyme to release this intermediate rather than proceed to macrocyclization. The enzyme rebinds the remaining peptide in a different conformation and catalyzes macrocyclization of the N-terminal 8 residues.

In terms of biological role, major toxin belonging to the bicyclic octapeptides amatoxins that acts by binding non-competitively to RNA polymerase II and greatly slowing the elongation of transcripts from target promoters. The polypeptide is Alpha-amanitin proprotein 2 (Galerina marginata (strain CBS 339.88)).